The primary structure comprises 357 residues: SUN domain-containing protein 3 (357 aa).

Over 1 to 47 (MSGKTKARRAAMFFRRCSEDASGSASGNALLSEDENPDANGVTRSWK) the chain is Nuclear. A helical membrane pass occupies residues 48–64 (IILSTMLTLTFLLVGLL). The Perinuclear space portion of the chain corresponds to 65–357 (NHQWLKETDV…RVHGTPGKHI (293 aa)). The stretch at 98–146 (RLRMPKEQLELLKKESQNLENNFRQILFLIEQIDVLKALLRDMKDGMDN) forms a coiled coil. Residues 193–354 (GASIIEAGTS…YRFRVHGTPG (162 aa)) form the SUN domain.

Self-associates. Interacts with SYNE1 and SPAG4/SUN4. Proposed to form a spermatogenesis-specific LINC complex with SYNE1 during sperm head formation possibly implicating a SUN domain-based heterotrimer with SPAG4/SUN4 associating with SYNE1.

The protein localises to the membrane. The protein resides in the nucleus envelope. Its subcellular location is the nucleus inner membrane. Its function is as follows. As a probable component of the LINC (LInker of Nucleoskeleton and Cytoskeleton) complex, involved in the connection between the nuclear lamina and the cytoskeleton. The nucleocytoplasmic interactions established by the LINC complex play an important role in the transmission of mechanical forces across the nuclear envelope and in nuclear movement and positioning. May be involved in nuclear remodeling during sperm head formation in spermatogenesis. A probable SUN3:SYNE1 LINC complex may tether spermatid nuclei to posterior cytoskeletal structures such as the manchette. The protein is SUN domain-containing protein 3 (SUN3) of Homo sapiens (Human).